The chain runs to 223 residues: Ribose-5-phosphate isomerase A (223 aa).

Residues 32-35, 85-88, and 98-101 contribute to the substrate site; these read TGST, DGAD, and KGGG. E107 (proton acceptor) is an active-site residue. K125 lines the substrate pocket.

Belongs to the ribose 5-phosphate isomerase family. Homodimer.

It catalyses the reaction aldehydo-D-ribose 5-phosphate = D-ribulose 5-phosphate. The protein operates within carbohydrate degradation; pentose phosphate pathway; D-ribose 5-phosphate from D-ribulose 5-phosphate (non-oxidative stage): step 1/1. In terms of biological role, catalyzes the reversible conversion of ribose-5-phosphate to ribulose 5-phosphate. This chain is Ribose-5-phosphate isomerase A, found in Pseudomonas syringae pv. tomato (strain ATCC BAA-871 / DC3000).